The sequence spans 1779 residues: 6-methylsalicylic acid synthase (1779 aa).

Positions 1 to 11 are enriched in polar residues; sequence MSASRSSTKFS. The segment at 1-40 is disordered; that stretch reads MSASRSSTKFSTPAEGSDNGKEFTTPATSTEGHEVPDRPG. The segment covering 31–40 has biased composition (basic and acidic residues); it reads EGHEVPDRPG. In terms of domain architecture, Ketosynthase family 3 (KS3) spans 43–472; that stretch reads LADVAIIGMA…GTVSHAVLEA (430 aa). Active-site for beta-ketoacyl synthase activity residues include Cys215, His350, and His392. A malonyl-CoA:ACP transacylase (MAT) domain region spans residues 586-883; it reads WIFSGHGAQW…TPTMVRRQPA (298 aa). The active-site For acyl/malonyl transferase activity is Ser672. The product template (PT) domain stretch occupies residues 942 to 1218; that stretch reads THDPAANNLL…SFAGLEGESF (277 aa). An N-terminal hotdog fold region spans residues 948–1064; that stretch reads NNLLGKRIAL…AAVGAANVVP (117 aa). In terms of domain architecture, PKS/mFAS DH spans 948–1219; it reads NNLLGKRIAL…FAGLEGESFS (272 aa). The Proton acceptor; for dehydratase activity role is filled by His980. Residues 1079-1219 form a C-terminal hotdog fold region; that stretch reads PQKLADSFSI…FAGLEGESFS (141 aa). The active-site Proton donor; for dehydratase activity is the Asp1138. The Carrier domain maps to 1703–1777; that stretch reads QHLRDVINGC…HLVKHFTKEL (75 aa). An O-(pantetheine 4'-phosphoryl)serine modification is found at Ser1737.

The enzyme catalyses 3 malonyl-CoA + acetyl-CoA + NADPH + 3 H(+) = 6-methylsalicylate + 3 CO2 + NADP(+) + 4 CoA + H2O. It functions in the pathway secondary metabolite biosynthesis; terpenoid biosynthesis. Its function is as follows. Non-reducing polyketide synthase; part of the gene cluster that mediates the biosynthesis of yanuthone D, a fungal isoprenoid epoxycyclohexenone that acts as an antibiotic against fungi and bacteria. The first step of the pathway is the synthesis of 6-methylsalicylic acid (6-MSA) by the polyketide synthase yanA. 6-MSA is then converted to m-cresol by the decarboxylase yanB. The cytochrome P450 monooxygenase yanC then catalyzes the oxidation of m-cresol to toluquinol. Epoxidation of toluquinol is then performed by the short chain dehydrogenase yanD, with the help of yanE, and a further prenylation by yanG leads to 7-deacetoxyyanuthone A. The next step is the hydroxylation of C-22 of 7-deacetoxyyanuthone A by the cytochrome P450 monooxygenase yanH to yield 22-deacetylyanuthone A. O-Mevalon transferase yanI then attaches mevalon to the hydroxyl group of 22-deacetylyanuthone A to produce yanuthone E. Finally, the FAD-dependent monooxygenase yanF oxidizes the hydroxyl group at C15 of yanuthone E to form yanuthone D. Furthermore, several branching points in the pathway lead to the production of yanuthones F and G from 7-deacetoxyyanuthone A; yanuthones H and I from 22-deacetylyanuthone A; and yanuthone J from yanuthone E. This chain is 6-methylsalicylic acid synthase, found in Aspergillus niger (strain ATCC 1015 / CBS 113.46 / FGSC A1144 / LSHB Ac4 / NCTC 3858a / NRRL 328 / USDA 3528.7).